Consider the following 201-residue polypeptide: Orotidine 5'-phosphate decarboxylase (201 aa).

Residues Asp-8, Lys-26, 52-61 (DLKFCDIPST), Thr-106, Arg-153, Gln-161, Gly-180, and Arg-181 contribute to the substrate site. Catalysis depends on Lys-54, which acts as the Proton donor.

It belongs to the OMP decarboxylase family. Type 1 subfamily. As to quaternary structure, homodimer.

It catalyses the reaction orotidine 5'-phosphate + H(+) = UMP + CO2. It functions in the pathway pyrimidine metabolism; UMP biosynthesis via de novo pathway; UMP from orotate: step 2/2. Catalyzes the decarboxylation of orotidine 5'-monophosphate (OMP) to uridine 5'-monophosphate (UMP). The chain is Orotidine 5'-phosphate decarboxylase (pyrF) from Thermotoga maritima (strain ATCC 43589 / DSM 3109 / JCM 10099 / NBRC 100826 / MSB8).